We begin with the raw amino-acid sequence, 236 residues long: Alpha-S2-casein (236 aa).

The first 15 residues, 1–15 (MKFFIFTCLLAVALA), serve as a signal peptide directing secretion. Phosphoserine occurs at positions 23, 24, 25, 28, 47, 80, 81, 82, 85, 157, and 169. The interval 72–93 (PTEVYSSSSSSEESAKFPTERE) is disordered. The segment covering 84-93 (ESAKFPTERE) has biased composition (basic and acidic residues).

The protein belongs to the alpha-casein family. Post-translationally, there are at least three different forms found in milk, with varying degrees of phosphorylation. These include form 10-P which is phosphorylated at ten sites that have not been determined, form 11-P which is phosphorylated at eleven sites and form 12-P which is phosphorylated at twelve sites. As to expression, mammary gland specific. Secreted in milk.

Its subcellular location is the secreted. Important role in the capacity of milk to transport calcium phosphate. This Equus asinus (Donkey) protein is Alpha-S2-casein.